Consider the following 454-residue polypeptide: MEVIRSQKRTVSNDVVSTPTLPLYLTAPHMEVRLEEFELFAIDRLRVLKGVSDGLARARNPNEMDDLVETLWKEHMRLSNVSEMINKDIISHFVLRLVYCRSDELKKWFLSMETALFRHRFRLKKIEEQRAIVGEFGLPYKAVIGAELESLKERLGLVARSHGQISSDVENIYYKVPFEEVPDLVASRRVLLQKGFAFVAGTQLVSLVVTQFRSHLSKALILTNRKWTTTIREREKDRLTPIVEALSTSYLGPDYSQSNEYADISLKDIDQVSKSSFPLCMRHLFEKLREDHHLKHGGRMQLGLFLKGVGLKLDDALAFWREEFTKKVGSERFDKEYAYAIRHNYGKEGKRTDYTPYACSKIITSAPGAGDHHGCPYRHFSEDNLKAALSRMGLSSRGMEDVMDKVRNRHYQLACTLTFEAVYGTSCDTGINHPNQYFEESQKILKSKTPAAPV.

Positions 280, 359, 375, and 415 each coordinate [4Fe-4S] cluster.

The protein belongs to the eukaryotic-type primase large subunit family. As to quaternary structure, heterodimer of a small subunit and a large subunit. [4Fe-4S] cluster serves as cofactor.

Functionally, DNA primase is the polymerase that synthesizes small RNA primers for the Okazaki fragments made during discontinuous DNA replication. This is Probable DNA primase large subunit from Arabidopsis thaliana (Mouse-ear cress).